Here is a 698-residue protein sequence, read N- to C-terminus: UvrABC system protein B (698 aa).

The 387-residue stretch at 28 to 414 (RRILAGERDV…SGGEFVEQVI (387 aa)) folds into the Helicase ATP-binding domain. 41–48 (GATGTGKS) is an ATP binding site. The Beta-hairpin motif lies at 94–117 (YYDYYQPEAYIAQTDTYIEKDSSI). Positions 432–598 (QIDDLIGEIR…PLRKKIADIL (167 aa)) constitute a Helicase C-terminal domain. Positions 609–629 (DTVQVGGSGRNVSRGRRAQSE) are disordered. The UVR domain maps to 653-688 (ADLIKDLTAQMMAAASDLQFELAARFRDEIADLKKE).

Belongs to the UvrB family. In terms of assembly, forms a heterotetramer with UvrA during the search for lesions. Interacts with UvrC in an incision complex.

Its subcellular location is the cytoplasm. In terms of biological role, the UvrABC repair system catalyzes the recognition and processing of DNA lesions. A damage recognition complex composed of 2 UvrA and 2 UvrB subunits scans DNA for abnormalities. Upon binding of the UvrA(2)B(2) complex to a putative damaged site, the DNA wraps around one UvrB monomer. DNA wrap is dependent on ATP binding by UvrB and probably causes local melting of the DNA helix, facilitating insertion of UvrB beta-hairpin between the DNA strands. Then UvrB probes one DNA strand for the presence of a lesion. If a lesion is found the UvrA subunits dissociate and the UvrB-DNA preincision complex is formed. This complex is subsequently bound by UvrC and the second UvrB is released. If no lesion is found, the DNA wraps around the other UvrB subunit that will check the other stand for damage. The polypeptide is UvrABC system protein B (Mycobacterium leprae (strain TN)).